The chain runs to 382 residues: Lipid-A-disaccharide synthase (382 aa).

It belongs to the LpxB family.

The catalysed reaction is 2-N,3-O-bis[(3R)-3-hydroxytetradecanoyl]-alpha-D-glucosaminyl 1-phosphate + UDP-2-N,3-O-bis[(3R)-3-hydroxytetradecanoyl]-alpha-D-glucosamine = lipid A disaccharide (E. coli) + UDP + H(+). It carries out the reaction a lipid X + a UDP-2-N,3-O-bis[(3R)-3-hydroxyacyl]-alpha-D-glucosamine = a lipid A disaccharide + UDP + H(+). The protein operates within glycolipid biosynthesis; lipid IV(A) biosynthesis; lipid IV(A) from (3R)-3-hydroxytetradecanoyl-[acyl-carrier-protein] and UDP-N-acetyl-alpha-D-glucosamine: step 5/6. Functionally, condensation of UDP-2,3-diacylglucosamine and 2,3-diacylglucosamine-1-phosphate to form lipid A disaccharide, a precursor of lipid A, a phosphorylated glycolipid that anchors the lipopolysaccharide to the outer membrane of the cell. This Escherichia coli O17:K52:H18 (strain UMN026 / ExPEC) protein is Lipid-A-disaccharide synthase.